Consider the following 177-residue polypeptide: Large ribosomal subunit protein uL6 (177 aa).

It belongs to the universal ribosomal protein uL6 family. Part of the 50S ribosomal subunit.

Its function is as follows. This protein binds to the 23S rRNA, and is important in its secondary structure. It is located near the subunit interface in the base of the L7/L12 stalk, and near the tRNA binding site of the peptidyltransferase center. This Pseudomonas putida (strain ATCC 700007 / DSM 6899 / JCM 31910 / BCRC 17059 / LMG 24140 / F1) protein is Large ribosomal subunit protein uL6.